The chain runs to 486 residues: Stretch-activated cation channel yam8 (486 aa).

Positions 1 to 24 (MFFFSTHLILKILFFWSITRNIFG) are cleaved as a signal peptide. The Extracellular portion of the chain corresponds to 25–464 (ATYTSLLLNN…PGVEFYESGS (440 aa)). N-linked (GlcNAc...) asparagine glycans are attached at residues Asn-33, Asn-49, Asn-59, Asn-82, and Asn-93. Residues 465–485 (ALLNISWRTFFISLIFWILFV) traverse the membrane as a helical segment. A topological domain (cytoplasmic) is located at residue Glu-486.

It is found in the cell membrane. Calcium-permeable, cation-selective stretch-activated channel (SAC) that functions together with CCH1 to mediate calcium entry into cells. Required during mating. The sequence is that of Stretch-activated cation channel yam8 from Schizosaccharomyces pombe (strain 972 / ATCC 24843) (Fission yeast).